We begin with the raw amino-acid sequence, 128 residues long: Large ribosomal subunit protein bL12 (128 aa).

Belongs to the bacterial ribosomal protein bL12 family. Homodimer. Part of the ribosomal stalk of the 50S ribosomal subunit. Forms a multimeric L10(L12)X complex, where L10 forms an elongated spine to which 2 to 4 L12 dimers bind in a sequential fashion. Binds GTP-bound translation factors.

Its function is as follows. Forms part of the ribosomal stalk which helps the ribosome interact with GTP-bound translation factors. Is thus essential for accurate translation. The chain is Large ribosomal subunit protein bL12 from Sulfurihydrogenibium sp. (strain YO3AOP1).